The sequence spans 302 residues: Sulfate adenylyltransferase subunit 2 (302 aa).

It belongs to the PAPS reductase family. CysD subfamily. As to quaternary structure, heterodimer composed of CysD, the smaller subunit, and CysN.

It carries out the reaction sulfate + ATP + H(+) = adenosine 5'-phosphosulfate + diphosphate. It functions in the pathway sulfur metabolism; hydrogen sulfide biosynthesis; sulfite from sulfate: step 1/3. In terms of biological role, with CysN forms the ATP sulfurylase (ATPS) that catalyzes the adenylation of sulfate producing adenosine 5'-phosphosulfate (APS) and diphosphate, the first enzymatic step in sulfur assimilation pathway. APS synthesis involves the formation of a high-energy phosphoric-sulfuric acid anhydride bond driven by GTP hydrolysis by CysN coupled to ATP hydrolysis by CysD. The protein is Sulfate adenylyltransferase subunit 2 of Escherichia coli O1:K1 / APEC.